Consider the following 340-residue polypeptide: 4-dimethylallyltryptophan N-methyltransferase ifgB (340 aa).

Belongs to the methyltransferase superfamily. In terms of assembly, homodimer.

The enzyme catalyses 4-(3-methylbut-2-enyl)-L-tryptophan + S-adenosyl-L-methionine = 4-(3-methylbut-2-enyl)-L-abrine + S-adenosyl-L-homocysteine + H(+). It participates in alkaloid biosynthesis; ergot alkaloid biosynthesis. Its function is as follows. 4-dimethylallyltryptophan N-methyltransferase; part of the gene cluster that mediates the biosynthesis of isofumigaclavines, fungal ergot alkaloids. The tryptophan dimethylallyltransferase ifgA catalyzes the first step of ergot alkaloid biosynthesis by condensing dimethylallyl diphosphate (DMAP) and tryptophan to form 4-dimethylallyl-L-tryptophan. The second step is catalyzed by the methyltransferase ifgB that methylates 4-dimethylallyl-L-tryptophan in the presence of S-adenosyl-L-methionine, resulting in the formation of N-methyl-dimethylallyl-L-tryptophan. The catalase ifgD and the FAD-dependent oxidoreductase ifgC then transform N-methyl-dimethylallyl-L-tryptophan to chanoclavine-I which is further oxidized by ifgE in the presence of NAD(+), resulting in the formation of chanoclavine-I aldehyde. The chanoclavine-I aldehyde reductases ifgG and/or fgaOx3 reduce chanoclavine-I aldehyde to dihydrochanoclavine-I aldehyde that spontaneously dehydrates to form 6,8-dimethyl-6,7-didehydroergoline. The festuclavine dehydrogenases ifgF1 and/or ifgF2 then catalyze the reduction of 6,8-dimethyl-6,7-didehydroergoline to form festuclavine. Hydrolysis of festuclavine by a yet undetermined cytochrome P450 monooxygenase (called ifgH) then leads to the formation of isofumigaclavine B which is in turn acetylated by ifgI to isofumigaclavine A. Penicillium roqueforti has interestingly at least two sets of genes for the consumption of chanoclavine-I aldehyde on three different loci, the OYEs ifgG/fgaOx3 and the festuclavine synthase homologs ifgF1/ifgF2. The reason for the duplication of these genes is unclear, probably to ensure the conversion of chanoclavine-I aldehyde by differential gene expression under various environmental conditions. The protein is 4-dimethylallyltryptophan N-methyltransferase ifgB of Penicillium roqueforti (strain FM164).